We begin with the raw amino-acid sequence, 122 residues long: Large ribosomal subunit protein uL14 (122 aa).

It belongs to the universal ribosomal protein uL14 family. Part of the 50S ribosomal subunit. Forms a cluster with proteins L3 and L19. In the 70S ribosome, L14 and L19 interact and together make contacts with the 16S rRNA in bridges B5 and B8.

Binds to 23S rRNA. Forms part of two intersubunit bridges in the 70S ribosome. This Burkholderia vietnamiensis (strain G4 / LMG 22486) (Burkholderia cepacia (strain R1808)) protein is Large ribosomal subunit protein uL14.